We begin with the raw amino-acid sequence, 355 residues long: Peptide chain release factor 1 (355 aa).

N5-methylglutamine is present on Gln233. The span at 281–293 (RRNKEQERADSRR) shows a compositional bias: basic and acidic residues. The disordered stretch occupies residues 281 to 308 (RRNKEQERADSRRGQIGSGDRSERIRTY).

Belongs to the prokaryotic/mitochondrial release factor family. Methylated by PrmC. Methylation increases the termination efficiency of RF1.

The protein resides in the cytoplasm. Peptide chain release factor 1 directs the termination of translation in response to the peptide chain termination codons UAG and UAA. In Rickettsia akari (strain Hartford), this protein is Peptide chain release factor 1.